Consider the following 306-residue polypeptide: Proline-rich transmembrane protein 1 (306 aa).

The segment at 1 to 142 is disordered; sequence MSSEKSGLPD…PPPAPAQTAQ (142 aa). Residues 1-223 are Cytoplasmic-facing; sequence MSSEKSGLPD…LEPRRPPHDY (223 aa). Over residues 15 to 36 the composition is skewed to pro residues; sequence TSPPPYNAPQPPAEPPAPPPQA. Over residues 40-49 the composition is skewed to basic residues; the sequence is SHHHHHHHYH. Pro residues-rich tracts occupy residues 87-111 and 121-137; these read HAPP…PPDP and PLPP…PPAP. Residues 224–244 form a helical membrane-spanning segment; that stretch reads MPIAVLTTICCFWPTGIIAIF. The Extracellular portion of the chain corresponds to 245-275; that stretch reads KAVQVRTALARGDMVSAEIASREARNFSFIS. An intramembrane region (helical) is located at residues 276-296; the sequence is LAVGIAAMVLCTILTVVIIIA. The Extracellular segment spans residues 297 to 306; that stretch reads AQHHENYWDP.

It belongs to the CD225/Dispanin family. As to quaternary structure, component of the outer core of AMPAR complex. AMPAR complex consists of an inner core made of 4 pore-forming GluA/GRIA proteins (GRIA1, GRIA2, GRIA3 and GRIA4) and 4 major auxiliary subunits arranged in a twofold symmetry. One of the two pairs of distinct binding sites is occupied either by CNIH2, CNIH3 or CACNG2, CACNG3. The other harbors CACNG2, CACNG3, CACNG4, CACNG8 or GSG1L. This inner core of AMPAR complex is complemented by outer core constituents binding directly to the GluA/GRIA proteins at sites distinct from the interaction sites of the inner core constituents. Outer core constituents include at least PRRT1, PRRT2, CKAMP44/SHISA9, FRRS1L and NRN1. The proteins of the inner and outer core serve as a platform for other, more peripherally associated AMPAR constituents. Alone or in combination, these auxiliary subunits control the gating and pharmacology of the AMPAR complex and profoundly impact their biogenesis and protein processing.

It is found in the cell membrane. Its subcellular location is the synapse. Its function is as follows. Required to maintain a pool of extrasynaptic AMPA-regulated glutamate receptors (AMPAR) which is necessary for synapse development and function. Regulates basal AMPAR function and synaptic transmission during development but is dispensable at mature hippocampal synapses. Plays a role in regulating basal phosphorylation levels of glutamate receptor GRIA1 and promotes GRIA1 and GRIA2 cell surface expression. This Homo sapiens (Human) protein is Proline-rich transmembrane protein 1.